A 457-amino-acid chain; its full sequence is MAVFARMVKGQVRHYSAPVDMAIPASKRKFIPSSGSYPKGFLVSGTHVGVKASNTKFPDLALISSETPCSAAAVFTTNKFQAAPVQVSRDILKTRQGHGIRSVVINSGCANAVTGKGGLEDAVAMGKKVDECNGLNEPSTLVMSTGVIGQRLPISKILNNIPAAHTNLSSTHDAWLSTARAICTTDTFPKLLSRTFTLPSSPERTYRLAGMTKGAGMIHPNMATLLGVLCTDAPVEPSALQSLLKYAVARSFNSISIDGDTSTNDTVAILANGAAGGAPVTSSAASPDYTALQDILTSFTQSLSQLVVRDGEGATKFVTVRVQNSPHYESARLIASTIARSPLVKTALYGRDANWGRILCAIGYTQGVAPGTVVPERTSVSFKPVDGSPILKLLVNGEPEQVDEERASVILQEEDLEIVVDLGGGEKGEQGLGGEEAVYWFCDFSHEYVTINGDYRT.

6 residues coordinate substrate: threonine 184, lysine 213, threonine 224, glutamate 312, asparagine 452, and threonine 457. Catalysis depends on threonine 224, which acts as the Nucleophile.

The protein belongs to the ArgJ family. In terms of assembly, heterodimer of an alpha and a beta chain. In terms of processing, the alpha and beta chains are autoproteolytically processed from a single precursor protein within the mitochondrion.

The protein resides in the mitochondrion matrix. The enzyme catalyses N(2)-acetyl-L-ornithine + L-glutamate = N-acetyl-L-glutamate + L-ornithine. It catalyses the reaction L-glutamate + acetyl-CoA = N-acetyl-L-glutamate + CoA + H(+). It functions in the pathway amino-acid biosynthesis; L-arginine biosynthesis; L-ornithine and N-acetyl-L-glutamate from L-glutamate and N(2)-acetyl-L-ornithine (cyclic): step 1/1. The protein operates within amino-acid biosynthesis; L-arginine biosynthesis; N(2)-acetyl-L-ornithine from L-glutamate: step 1/4. Its function is as follows. Catalyzes two activities which are involved in the cyclic version of arginine biosynthesis: the synthesis of acetylglutamate from glutamate and acetyl-CoA, and of ornithine by transacetylation between acetylornithine and glutamate. In Aspergillus terreus (strain NIH 2624 / FGSC A1156), this protein is Arginine biosynthesis bifunctional protein ArgJ, mitochondrial.